The sequence spans 445 residues: Ubiquitin carboxyl-terminal hydrolase MINDY-3 (445 aa).

C51 (nucleophile) is an active-site residue. Residue S125 is modified to Phosphoserine. H287 (proton acceptor) is an active-site residue.

Belongs to the MINDY deubiquitinase family. FAM188 subfamily. In terms of assembly, interacts with COPS5.

Its subcellular location is the nucleus. The catalysed reaction is Thiol-dependent hydrolysis of ester, thioester, amide, peptide and isopeptide bonds formed by the C-terminal Gly of ubiquitin (a 76-residue protein attached to proteins as an intracellular targeting signal).. In terms of biological role, hydrolase that can remove 'Lys-48'-linked conjugated ubiquitin from proteins. The polypeptide is Ubiquitin carboxyl-terminal hydrolase MINDY-3 (MINDY3) (Bos taurus (Bovine)).